A 186-amino-acid chain; its full sequence is UPF0398 protein LBUL_0921 (186 aa).

This sequence belongs to the UPF0398 family.

This is UPF0398 protein LBUL_0921 from Lactobacillus delbrueckii subsp. bulgaricus (strain ATCC BAA-365 / Lb-18).